We begin with the raw amino-acid sequence, 781 residues long: Zinc finger protein klf1 (781 aa).

2 consecutive C2H2-type zinc fingers follow at residues 17–41 and 47–70; these read YKCD…FRSH and FICP…NQKH.

Its subcellular location is the nucleus. It is found in the cytoplasm. The protein resides in the cytoskeleton. It localises to the spindle. Required for maintaining cell viability in nitrogen-deficient stationary phase (G0) cells. In Schizosaccharomyces pombe (strain 972 / ATCC 24843) (Fission yeast), this protein is Zinc finger protein klf1 (klf1).